The chain runs to 484 residues: MEKSKNIWSLILTEIKKELSEEEFYVWFENLCFLESIGDNIQISTPNLFHKNQIEKRFTKKIKEILTKNGYNNVTIVFTNQPPKTYSSKQESEKTTFKETLQNFDKLKGNTLSKEPIQSIKDRIKMYIKEEEPTNFKNPFLKKRYTFENFIIGPNNRLAYNASLSISKNPGKKYNPCLIYGGVGLGKTHLLQSIGNKTEELHNNLKILYVTAENFLNEFVESIKTHETKKFKKKYRYLDMLLIDDIHDLQKKEGIQEELFHTFNALYEDNKQLVFTCDRSPSELTNFTDRLKSRFTRGLNVDISKPNFELRVAIIEKKAEEDGIKVPKDILNLVAQKVTTNVRDLEAAVTKLKAYIDLDNIEIDIDIVEKIIKEIIIYEKETTNESSNKINIENIKKILLRELKIAHKDIEGHSKKPEITKARHIYAYLLRNFTELSTVEIGKIIGGKTHSTVLYSINKIDRDRNNDKEINNLITELMNKIKKN.

Positions 1–74 are domain I, interacts with DnaA modulators; that stretch reads MEKSKNIWSL…ILTKNGYNNV (74 aa). A domain II region spans residues 74 to 139; that stretch reads VTIVFTNQPP…EEEPTNFKNP (66 aa). The tract at residues 140–356 is domain III, AAA+ region; sequence FLKKRYTFEN…AAVTKLKAYI (217 aa). Gly-184, Gly-186, Lys-187, and Thr-188 together coordinate ATP. The domain IV, binds dsDNA stretch occupies residues 357-484; it reads DLDNIEIDID…TELMNKIKKN (128 aa).

It belongs to the DnaA family. In terms of assembly, oligomerizes as a right-handed, spiral filament on DNA at oriC.

The protein localises to the cytoplasm. Functionally, plays an essential role in the initiation and regulation of chromosomal replication. ATP-DnaA binds to the origin of replication (oriC) to initiate formation of the DNA replication initiation complex once per cell cycle. Binds the DnaA box (a 9 base pair repeat at the origin) and separates the double-stranded (ds)DNA. Forms a right-handed helical filament on oriC DNA; dsDNA binds to the exterior of the filament while single-stranded (ss)DNA is stabiized in the filament's interior. The ATP-DnaA-oriC complex binds and stabilizes one strand of the AT-rich DNA unwinding element (DUE), permitting loading of DNA polymerase. After initiation quickly degrades to an ADP-DnaA complex that is not apt for DNA replication. Binds acidic phospholipids. The polypeptide is Chromosomal replication initiator protein DnaA (Borrelia garinii subsp. bavariensis (strain ATCC BAA-2496 / DSM 23469 / PBi) (Borreliella bavariensis)).